We begin with the raw amino-acid sequence, 331 residues long: Phosphate acyltransferase (331 aa).

It belongs to the PlsX family. Homodimer. Probably interacts with PlsY.

The protein localises to the cytoplasm. The catalysed reaction is a fatty acyl-[ACP] + phosphate = an acyl phosphate + holo-[ACP]. Its pathway is lipid metabolism; phospholipid metabolism. Its function is as follows. Catalyzes the reversible formation of acyl-phosphate (acyl-PO(4)) from acyl-[acyl-carrier-protein] (acyl-ACP). This enzyme utilizes acyl-ACP as fatty acyl donor, but not acyl-CoA. The chain is Phosphate acyltransferase from Ureaplasma urealyticum serovar 10 (strain ATCC 33699 / Western).